A 199-amino-acid chain; its full sequence is Early nodulin-like protein 3 (199 aa).

Positions 1–23 (MGLVMRFDLYLMFVMLMGLGFTI) are cleaved as a signal peptide. Residues 27–128 (YKFYVGGKDG…GQKLAVKVLS (102 aa)) form the Phytocyanin domain. N-linked (GlcNAc...) asparagine glycans are attached at residues N57 and N83. Cysteines 82 and 116 form a disulfide. The interval 130–180 (VHHSHSPRHTSPSPSPVHQELSSPGPSPGVEPSSDSNSRVPAPGPATAPNS) is disordered. Residues 138–165 (HTSPSPSPVHQELSSPGPSPGVEPSSDS) are compositionally biased toward low complexity. Residue N179 is the site of GPI-anchor amidated asparagine attachment. The propeptide at 180–199 (SAGLVGPGMVVLVIMISSLF) is removed in mature form.

Belongs to the early nodulin-like (ENODL) family. Confined to flowers.

The protein localises to the cell membrane. May act as a carbohydrate transporter. The polypeptide is Early nodulin-like protein 3 (Arabidopsis thaliana (Mouse-ear cress)).